Here is a 467-residue protein sequence, read N- to C-terminus: ATP synthase subunit beta (467 aa).

G156–T163 contributes to the ATP binding site.

This sequence belongs to the ATPase alpha/beta chains family. In terms of assembly, F-type ATPases have 2 components, CF(1) - the catalytic core - and CF(0) - the membrane proton channel. CF(1) has five subunits: alpha(3), beta(3), gamma(1), delta(1), epsilon(1). CF(0) has three main subunits: a(1), b(2) and c(9-12). The alpha and beta chains form an alternating ring which encloses part of the gamma chain. CF(1) is attached to CF(0) by a central stalk formed by the gamma and epsilon chains, while a peripheral stalk is formed by the delta and b chains.

The protein localises to the cell membrane. The catalysed reaction is ATP + H2O + 4 H(+)(in) = ADP + phosphate + 5 H(+)(out). Produces ATP from ADP in the presence of a proton gradient across the membrane. The catalytic sites are hosted primarily by the beta subunits. In Cytobacillus firmus (Bacillus firmus), this protein is ATP synthase subunit beta.